Consider the following 410-residue polypeptide: Chaperonin GroEL (410 aa).

ATP contacts are provided by residues 29-32 (TAGP), lysine 50, and 86-90 (DGTTT).

Belongs to the chaperonin (HSP60) family. Forms a cylinder of 14 subunits composed of two heptameric rings stacked back-to-back. Interacts with the co-chaperonin GroES.

The protein localises to the cytoplasm. It carries out the reaction ATP + H2O + a folded polypeptide = ADP + phosphate + an unfolded polypeptide.. Its function is as follows. Together with its co-chaperonin GroES, plays an essential role in assisting protein folding. The GroEL-GroES system forms a nano-cage that allows encapsulation of the non-native substrate proteins and provides a physical environment optimized to promote and accelerate protein folding. The polypeptide is Chaperonin GroEL (Ehrlichia canis).